The primary structure comprises 141 residues: ATP synthase epsilon chain (141 aa).

This sequence belongs to the ATPase epsilon chain family. F-type ATPases have 2 components, CF(1) - the catalytic core - and CF(0) - the membrane proton channel. CF(1) has five subunits: alpha(3), beta(3), gamma(1), delta(1), epsilon(1). CF(0) has three main subunits: a, b and c.

Its subcellular location is the cell inner membrane. Its function is as follows. Produces ATP from ADP in the presence of a proton gradient across the membrane. In Cellvibrio japonicus (strain Ueda107) (Pseudomonas fluorescens subsp. cellulosa), this protein is ATP synthase epsilon chain.